We begin with the raw amino-acid sequence, 234 residues long: DNA repair protein RecO (234 aa).

It belongs to the RecO family.

In terms of biological role, involved in DNA repair and RecF pathway recombination. The sequence is that of DNA repair protein RecO from Halorhodospira halophila (strain DSM 244 / SL1) (Ectothiorhodospira halophila (strain DSM 244 / SL1)).